We begin with the raw amino-acid sequence, 358 residues long: Diels-Alderase phmD (358 aa).

Belongs to the Diels-Alderase family.

Its pathway is mycotoxin biosynthesis. In terms of biological role, diels-Alderase; part of the gene cluster that mediates the biosynthesis of the mycotoxins phomacins, leucine-derived cytochalasans with potent actin polymerization-inhibitory activities and monocot-specific antigerminative activities. The first step in the pathway is catalyzed by the hybrid PKS-NRPS phmA, assisted by the enoyl reductase phmE, that are responsible for fusion of the leucine precursor and the polyketide backbone to produce a 2-pyrrolidone intermediate. The polyketide synthase module (PKS) of phmA is responsible for the synthesis of the polyketide backbone and the downstream nonribosomal peptide synthetase (NRPS) amidates the carboxyl end of the polyketide with the leucine precursor. Because phmA lacks a designated enoylreductase (ER) domain, the required activity is provided the enoyl reductase phmE. Reduction by the hydrolyase phmG, followed by dehydration and intra-molecular Diels-Alder cyclization by the Diels-Alderase phmD then yield the required isoindolone-fused macrocycle. A number of oxidative steps catalyzed by the tailoring cytochrome P450 monooxygenase phmB, the FAD-linked oxidoreductase phmC and the short-chain dehydrogenase/reductase phmF, are further required to afford the final products, phomacin D and phomacin E. The chain is Diels-Alderase phmD from Phaeosphaeria nodorum (strain SN15 / ATCC MYA-4574 / FGSC 10173) (Glume blotch fungus).